We begin with the raw amino-acid sequence, 214 residues long: Dimethylamine corrinoid protein 2 (214 aa).

One can recognise a B12-binding N-terminal domain in the interval 1–91 (MATKEELIQE…DMPAGAATKK (91 aa)). In terms of domain architecture, B12-binding spans 92 to 214 (LGVIVNGTVE…AVAKAKELLL (123 aa)). H105 is a methylcob(III)alamin binding site.

Belongs to the methylamine corrinoid protein family.

It participates in one-carbon metabolism; methanogenesis from dimethylamine. Functionally, acts as a methyl group carrier between MtbB and MtbA. The chain is Dimethylamine corrinoid protein 2 (mtbC2) from Methanosarcina mazei (strain ATCC BAA-159 / DSM 3647 / Goe1 / Go1 / JCM 11833 / OCM 88) (Methanosarcina frisia).